We begin with the raw amino-acid sequence, 213 residues long: Virulence factor 1 (213 aa).

Its subcellular location is the host mitochondrion. In terms of biological role, plays a role in antagonizing the host innate immune response. The polypeptide is Virulence factor 1 (Norovirus (isolate Mouse/NoV/United States/MNV1/2002/GV) (MNV-1)).